The chain runs to 1197 residues: SRC kinase signaling inhibitor 1 (1197 aa).

Over residues 19–45 (AEGRARSPREEVGPRDPGGRGEPDPER) the composition is skewed to basic and acidic residues. The tract at residues 19–80 (AEGRARSPRE…GGSGGRRFSN (62 aa)) is disordered. Serine 47 and serine 52 each carry phosphoserine. Residues 65–75 (LGGGGSGGSGG) show a composition bias toward gly residues. Serine 79 bears the Phosphoserine mark. Position 86 is a phosphothreonine (threonine 86). Phosphoserine occurs at positions 87, 98, 178, 200, 204, 214, and 260. Tyrosine 276 is subject to Phosphotyrosine. Residues 319 to 415 (ASRESSPTRR…RRDVKPDEDL (97 aa)) are disordered. The span at 321–331 (RESSPTRRLNN) shows a compositional bias: polar residues. Low complexity predominate over residues 332–341 (LSPASHLASS). Serine 333, serine 342, and serine 359 each carry phosphoserine. The segment covering 348 to 366 (PSGLPSGLPSGSPSRSRLS) has biased composition (low complexity). Residues arginine 364 and arginine 371 each carry the omega-N-methylarginine modification. 3 positions are modified to phosphoserine: serine 378, serine 397, and serine 399. The segment covering 391-400 (PTSQGVSPSP) has biased composition (polar residues). Residues 404–415 (LERRDVKPDEDL) show a composition bias toward basic and acidic residues. Position 431 is a phosphotyrosine (tyrosine 431). The interval 501-676 (GFRLPPSSPQ…AVSSTPAGQP (176 aa)) is disordered. Pro residues predominate over residues 520-531 (GGPPPPHSPYSG). A phosphoserine mark is found at serine 527, serine 530, and serine 534. Omega-N-methylarginine is present on arginine 535. Serine 537, serine 547, serine 549, serine 551, and serine 556 each carry phosphoserine. Residues 595–607 (KDTETRERMEAME) show a composition bias toward basic and acidic residues. A phosphoserine mark is found at serine 631 and serine 655. Threonine 658 and threonine 671 each carry phosphothreonine. An interaction with SNAP25 region spans residues 681 to 731 (RLQMQMHLRGLQNSASDLRGQLQQLRKLQLQNQESVRALLKRTEAELSMRV). 2 coiled-coil regions span residues 688-708 (LRGL…LRKL) and 760-780 (EELI…IQRD). A phosphoserine mark is found at serine 878 and serine 900. 2 disordered regions span residues 891–949 (GLDF…ERDW) and 983–1065 (DCAS…VVTS). Phosphothreonine is present on threonine 918. Position 1021 is a phosphoserine (serine 1021). Positions 1036–1045 (KSPPPPPPRR) are enriched in pro residues. Serine 1077 and serine 1094 each carry phosphoserine. The interval 1141–1163 (SRLKAAQGPAGSPDKGKHGKQRT) is disordered.

This sequence belongs to the SRCIN1 family. In terms of assembly, interacts with BCAR1/p130Cas through its C-terminal domain and with CSK, CTTN and SRC. Also interacts with MAPRE3/EB3, SORBS3/vinexin and the N-terminal coiled-coil region of SNAP25. Post-translationally, tyrosine-phosphorylated in response to EGF and to cell adhesion to integrin ligands. As to expression, expressed exclusively in brain. Abundant in telencephalon and expressed moderately in cerebellum, hypothalamus, thalamus, superior and inferior colliculi, and olfactory bulb. No expression detected in medulla oblongata, spinal cord or pituitary gland. Enriched in the neuropil rather than soma in the thalamus, corpus striatum and cerebral cortex. Detected in astrocytes.

The protein resides in the cytoplasm. Its subcellular location is the cytoskeleton. The protein localises to the cell projection. It is found in the axon. It localises to the dendrite. The protein resides in the presynapse. Its subcellular location is the postsynapse. The protein localises to the postsynaptic density. Acts as a negative regulator of SRC by activating CSK which inhibits SRC activity and downstream signaling, leading to impaired cell spreading and migration. Regulates dendritic spine morphology. Involved in calcium-dependent exocytosis. May play a role in neurotransmitter release or synapse maintenance. The protein is SRC kinase signaling inhibitor 1 of Rattus norvegicus (Rat).